Here is a 309-residue protein sequence, read N- to C-terminus: MILTVTLNPAIDVSYPLDELKCDTVNRVVDVTKTPGGKGLNVCRVLNDFGETVKATGCIGGESGDFIINHLPDSILSRFYKISGDTRTCIAILHEGNQTEILEKGPLLSVNEIDGFTHHFKYLLNDVDVVTLSDSLPAGMPDDYYQKLIGIANLNGKKTVLDCSGNALEAVLKGDSKPTVIKPNLEELSQLLGKEMTKDFDALKEVLQDKLFDGIEWIIVSLGADGVFAKHKDTFYKVDIPKIKIVSAVGSGDSTVAGIASGLANDEDDRALLTKANVLGMLNAQEKTTGHVNMANYDKLYQSIKVKEV.

Belongs to the carbohydrate kinase PfkB family. LacC subfamily.

It carries out the reaction D-tagatofuranose 6-phosphate + ATP = D-tagatofuranose 1,6-bisphosphate + ADP + H(+). It participates in carbohydrate metabolism; D-tagatose 6-phosphate degradation; D-glyceraldehyde 3-phosphate and glycerone phosphate from D-tagatose 6-phosphate: step 1/2. This Streptococcus pyogenes serotype M6 (strain ATCC BAA-946 / MGAS10394) protein is Tagatose-6-phosphate kinase.